The chain runs to 420 residues: Gamma-glutamyl phosphate reductase (420 aa).

Belongs to the gamma-glutamyl phosphate reductase family.

Its subcellular location is the cytoplasm. It catalyses the reaction L-glutamate 5-semialdehyde + phosphate + NADP(+) = L-glutamyl 5-phosphate + NADPH + H(+). Its pathway is amino-acid biosynthesis; L-proline biosynthesis; L-glutamate 5-semialdehyde from L-glutamate: step 2/2. Its function is as follows. Catalyzes the NADPH-dependent reduction of L-glutamate 5-phosphate into L-glutamate 5-semialdehyde and phosphate. The product spontaneously undergoes cyclization to form 1-pyrroline-5-carboxylate. The protein is Gamma-glutamyl phosphate reductase of Shewanella amazonensis (strain ATCC BAA-1098 / SB2B).